Reading from the N-terminus, the 202-residue chain is Recombination protein RecR (202 aa).

The C4-type zinc finger occupies 57–72 (CGVCRTFTEQPCCDIC). The Toprim domain occupies 81–176 (GQICVVESPS…STTKIAHGVP (96 aa)).

Belongs to the RecR family.

In terms of biological role, may play a role in DNA repair. It seems to be involved in an RecBC-independent recombinational process of DNA repair. It may act with RecF and RecO. The chain is Recombination protein RecR from Hamiltonella defensa subsp. Acyrthosiphon pisum (strain 5AT).